Here is a 140-residue protein sequence, read N- to C-terminus: Phosphoribosyl-AMP cyclohydrolase (140 aa).

Asp78 is a Mg(2+) binding site. Cys79 contributes to the Zn(2+) binding site. Mg(2+)-binding residues include Asp80 and Asp82. Zn(2+) contacts are provided by Cys96 and Cys103.

It belongs to the PRA-CH family. As to quaternary structure, homodimer. Requires Mg(2+) as cofactor. Zn(2+) is required as a cofactor.

The protein resides in the cytoplasm. The enzyme catalyses 1-(5-phospho-beta-D-ribosyl)-5'-AMP + H2O = 1-(5-phospho-beta-D-ribosyl)-5-[(5-phospho-beta-D-ribosylamino)methylideneamino]imidazole-4-carboxamide. The protein operates within amino-acid biosynthesis; L-histidine biosynthesis; L-histidine from 5-phospho-alpha-D-ribose 1-diphosphate: step 3/9. Its function is as follows. Catalyzes the hydrolysis of the adenine ring of phosphoribosyl-AMP. The polypeptide is Phosphoribosyl-AMP cyclohydrolase (Ralstonia pickettii (strain 12J)).